We begin with the raw amino-acid sequence, 141 residues long: Hemoglobin subunit alpha (141 aa).

The Globin domain occupies 1-141 (VLSPADKSNV…VSTVLVSKYR (141 aa)). Position 3 is a phosphoserine (serine 3). Residues lysine 7 and lysine 11 each carry the N6-succinyllysine modification. At lysine 16 the chain carries N6-acetyllysine; alternate. N6-succinyllysine; alternate is present on lysine 16. Position 24 is a phosphotyrosine (tyrosine 24). Serine 35 is modified (phosphoserine). Lysine 40 carries the N6-succinyllysine modification. Serine 49 carries the phosphoserine modification. Histidine 58 contacts O2. Histidine 87 lines the heme b pocket. Serine 102 is subject to Phosphoserine. Position 108 is a phosphothreonine (threonine 108). A Phosphoserine modification is found at serine 124. Threonine 134 is subject to Phosphothreonine. Serine 138 is subject to Phosphoserine.

Belongs to the globin family. In terms of assembly, heterotetramer of two alpha chains and two beta chains. As to expression, red blood cells.

In terms of biological role, involved in oxygen transport from the lung to the various peripheral tissues. Hemopressin acts as an antagonist peptide of the cannabinoid receptor CNR1. Hemopressin-binding efficiently blocks cannabinoid receptor CNR1 and subsequent signaling. The sequence is that of Hemoglobin subunit alpha (HBA) from Chalinolobus morio (Chocolate-wattled bat).